Consider the following 249-residue polypeptide: ATP synthase subunit a, chloroplastic (249 aa).

Transmembrane regions (helical) follow at residues 40–60, 97–117, 136–156, 201–221, and 222–242; these read QVLITSWVVIAILLGSAVLVV, VPFIGTLFLFIFVSNWSGALL, INTTVALALLTSVAYFYAGLS, LVVVVLVSLVPLVVPIPVMFL, and GLFTSGIQALIFATLAAAYIG.

This sequence belongs to the ATPase A chain family. In terms of assembly, F-type ATPases have 2 components, CF(1) - the catalytic core - and CF(0) - the membrane proton channel. CF(1) has five subunits: alpha(3), beta(3), gamma(1), delta(1), epsilon(1). CF(0) has four main subunits: a, b, b' and c.

The protein localises to the plastid. The protein resides in the chloroplast thylakoid membrane. Functionally, key component of the proton channel; it plays a direct role in the translocation of protons across the membrane. This is ATP synthase subunit a, chloroplastic from Aethionema grandiflorum (Persian stone-cress).